The following is a 426-amino-acid chain: 3-phosphoshikimate 1-carboxyvinyltransferase (426 aa).

Positions 20, 21, and 25 each coordinate 3-phosphoshikimate. Position 20 (Lys20) interacts with phosphoenolpyruvate. Positions 92 and 120 each coordinate phosphoenolpyruvate. The 3-phosphoshikimate site is built by Ser165, Gln167, Asp313, and Lys340. Gln167 serves as a coordination point for phosphoenolpyruvate. Residue Asp313 is the Proton acceptor of the active site. 2 residues coordinate phosphoenolpyruvate: Arg344 and Arg386.

It belongs to the EPSP synthase family. Monomer.

It localises to the cytoplasm. It carries out the reaction 3-phosphoshikimate + phosphoenolpyruvate = 5-O-(1-carboxyvinyl)-3-phosphoshikimate + phosphate. It functions in the pathway metabolic intermediate biosynthesis; chorismate biosynthesis; chorismate from D-erythrose 4-phosphate and phosphoenolpyruvate: step 6/7. Its function is as follows. Catalyzes the transfer of the enolpyruvyl moiety of phosphoenolpyruvate (PEP) to the 5-hydroxyl of shikimate-3-phosphate (S3P) to produce enolpyruvyl shikimate-3-phosphate and inorganic phosphate. This chain is 3-phosphoshikimate 1-carboxyvinyltransferase, found in Brevibacillus brevis (strain 47 / JCM 6285 / NBRC 100599).